The chain runs to 454 residues: MALNVVILAAGKGTRMRSDLPKVLHPIAHKSMVQHVIDTAHSIGSDAIQLVYGYGADKLKSALGEQQLNWMLQAEQLGTGHAVAQAIPNIDDNDTVLILYGDVPLIQASTLEALLAARPDHGVAILTVNLVNPTGYGRIVREQGKVVGIVEQKDANAEQLAINEINTGIMAVPGKALKTWLGRLSNNNAQGEYYLTDIIAMAHADGVEINTAQPQSAIEVEGANNRVQLAQLERAYQAREAEKLMIAGANLRDPSRIDIRGEVTVGMDVMVDVNVIFEGKVVIGNNVSIGAGAILIDCEIADNAEIKPYSIIEGAKLGVAASAGPFARLRPGAELMQDAHIGNFVEMKKAVLGVGSKAGHLAYLGDAQIGAGVNIGAGTITCNYDGANKHLTVIEDNVFVGSDTQLVAPVTIGKGATLGAGSTITRDVGEDELVITRVKQKHLTGWQRPVKIKK.

The pyrophosphorylase stretch occupies residues 1 to 226; the sequence is MALNVVILAA…AIEVEGANNR (226 aa). Residues 8 to 11, lysine 22, glutamine 73, 78 to 79, 100 to 102, glycine 137, glutamate 151, asparagine 166, and asparagine 224 each bind UDP-N-acetyl-alpha-D-glucosamine; these read LAAG, GT, and YGD. Position 102 (aspartate 102) interacts with Mg(2+). Mg(2+) is bound at residue asparagine 224. A linker region spans residues 227 to 247; sequence VQLAQLERAYQAREAEKLMIA. The interval 248–454 is N-acetyltransferase; it reads GANLRDPSRI…GWQRPVKIKK (207 aa). Residues arginine 330 and lysine 348 each contribute to the UDP-N-acetyl-alpha-D-glucosamine site. Histidine 360 serves as the catalytic Proton acceptor. UDP-N-acetyl-alpha-D-glucosamine-binding residues include tyrosine 363 and asparagine 374. Residues alanine 377, 383–384, serine 402, alanine 420, and arginine 437 contribute to the acetyl-CoA site; that span reads NY.

In the N-terminal section; belongs to the N-acetylglucosamine-1-phosphate uridyltransferase family. It in the C-terminal section; belongs to the transferase hexapeptide repeat family. Homotrimer. The cofactor is Mg(2+).

The protein resides in the cytoplasm. The enzyme catalyses alpha-D-glucosamine 1-phosphate + acetyl-CoA = N-acetyl-alpha-D-glucosamine 1-phosphate + CoA + H(+). The catalysed reaction is N-acetyl-alpha-D-glucosamine 1-phosphate + UTP + H(+) = UDP-N-acetyl-alpha-D-glucosamine + diphosphate. It functions in the pathway nucleotide-sugar biosynthesis; UDP-N-acetyl-alpha-D-glucosamine biosynthesis; N-acetyl-alpha-D-glucosamine 1-phosphate from alpha-D-glucosamine 6-phosphate (route II): step 2/2. The protein operates within nucleotide-sugar biosynthesis; UDP-N-acetyl-alpha-D-glucosamine biosynthesis; UDP-N-acetyl-alpha-D-glucosamine from N-acetyl-alpha-D-glucosamine 1-phosphate: step 1/1. Its pathway is bacterial outer membrane biogenesis; LPS lipid A biosynthesis. In terms of biological role, catalyzes the last two sequential reactions in the de novo biosynthetic pathway for UDP-N-acetylglucosamine (UDP-GlcNAc). The C-terminal domain catalyzes the transfer of acetyl group from acetyl coenzyme A to glucosamine-1-phosphate (GlcN-1-P) to produce N-acetylglucosamine-1-phosphate (GlcNAc-1-P), which is converted into UDP-GlcNAc by the transfer of uridine 5-monophosphate (from uridine 5-triphosphate), a reaction catalyzed by the N-terminal domain. The polypeptide is Bifunctional protein GlmU (Shewanella sp. (strain MR-4)).